Reading from the N-terminus, the 1510-residue chain is Cysteine-tryptophan domain-containing zinc finger protein 5 (1510 aa).

Positions 174-196 (YCQRTSSENDSNHSQQLLNSGPE) are enriched in polar residues. 4 disordered regions span residues 174 to 198 (YCQRTSSENDSNHSQQLLNSGPEQK), 449 to 497 (SSLD…CAKD), 555 to 574 (KPNYDTTRKPNGENEGYVLD), and 582 to 616 (LHTEDKSLKTEKESATSGLTDKDFSGGGNDGDHKI). A compositionally biased stretch (basic and acidic residues) spans 454-465 (GFSHKTKSDKCN). Over residues 467–476 (QPVTTSSQLQ) the composition is skewed to polar residues. Composition is skewed to basic and acidic residues over residues 479–497 (PAKKTSLKRDRGKVVCAKD) and 556–574 (PNYDTTRKPNGENEGYVLD). The CW-type zinc-finger motif lies at 645–698 (SEPVDQWVCCDKCETWRLLPYGMNSDTLPKKWRCSMQSWLPGMNNCKLSEGETT). 4 residues coordinate Zn(2+): Cys-654, Cys-657, Cys-678, and Cys-690. Residues 768–780 (KQKRIESSDKGEK) are compositionally biased toward basic and acidic residues. Disordered stretches follow at residues 768 to 893 (KQKR…RDLF), 1003 to 1050 (STAA…LDRH), and 1149 to 1194 (LPIH…VRPD). The span at 781 to 790 (STVTISSGQT) shows a compositional bias: polar residues. Over residues 874–893 (NSDRGARASDAGKSDPRDLF) the composition is skewed to basic and acidic residues. Over residues 1003-1016 (STAATSSSSKVSSS) the composition is skewed to low complexity. Composition is skewed to polar residues over residues 1026-1040 (TRTSPVESVSSSPLR) and 1162-1182 (PDQNGKTLPQYNSNQSDQAKL).

Highly expressed in young panicles. Expressed at low levels in leaf sheaths, nodes, internodes and axillary buds.

It localises to the nucleus. In terms of biological role, binds to histones H3K4me1, H3K4me2 and H3K4me3 in GST pull-down assay. May facilitate the recruitment of effectors to mediate gene expression. This Oryza sativa subsp. japonica (Rice) protein is Cysteine-tryptophan domain-containing zinc finger protein 5.